Consider the following 388-residue polypeptide: Type II secretion system protein F (388 aa).

The tract at residues 1-28 is disordered; that stretch reads MTEGDSARQVRQQLREQGLTPLEVNETT. At 1-153 the chain is on the cytoplasmic side; it reads MTEGDSARQV…HMRTKLLQAM (153 aa). Positions 79, 133, and 137 each coordinate Ca(2+). A helical membrane pass occupies residues 154–174; it reads IYPIVLTLVAVGVISILLTAV. At 175 to 205 the chain is on the periplasmic side; it reads VPKVVAQFEHMGQQLPATTRFLIGTSELMQH. A helical membrane pass occupies residues 206-226; the sequence is YGLWFLLLLFIGGFVWRWWLT. Residues 227–350 are Cytoplasmic-facing; sequence DEKRRRHWHQ…QDREFETQVN (124 aa). The chain crosses the membrane as a helical span at residues 351–371; sequence IALGVFEPLLVVSMAGVVLFI. At 372 to 388 the chain is on the periplasmic side; sequence VMSILQPILELNNMVNL.

This sequence belongs to the GSP F family. As to quaternary structure, type II secretion system is composed of four main components: the outer membrane complex, the inner membrane complex, the cytoplasmic secretion ATPase and the periplasm-spanning pseudopilus. Homodimer. Interacts with ExeE and ExeL components.

The protein localises to the cell inner membrane. In terms of biological role, component of the type II secretion system inner membrane complex required for the energy-dependent secretion of extracellular factors such as proteases and toxins from the periplasm. In Aeromonas hydrophila, this protein is Type II secretion system protein F (exeF).